A 122-amino-acid polypeptide reads, in one-letter code: Large ribosomal subunit protein uL14 (122 aa).

Belongs to the universal ribosomal protein uL14 family. Part of the 50S ribosomal subunit. Forms a cluster with proteins L3 and L19. In the 70S ribosome, L14 and L19 interact and together make contacts with the 16S rRNA in bridges B5 and B8.

Its function is as follows. Binds to 23S rRNA. Forms part of two intersubunit bridges in the 70S ribosome. This chain is Large ribosomal subunit protein uL14, found in Anaeromyxobacter sp. (strain Fw109-5).